Reading from the N-terminus, the 452-residue chain is MVQLLAGRWRPTGARRGTRGGLPELSSAAKHEDSLFRDLFEDYERWVRPVEHLSDKIKIKFGLAISQLVDVDEKNQLMTTNVWLKQEWIDVKLRWNPDDYGGIKIIRVPSDSLWIPDIVLFDNADGRFEGASTKTVVRYNGTVTWTQPANYKSSCTIDVTFFPFDLQNCSMKFGSWTYDGSQVDIILEDQDVDRTDFFDNGEWEIMSAMGSKGNRTDSCCWYPYITYSFVIKRLPLFYTLFLIIPCIGLSFLTVVVFYLPSNEGEKISLCTSVLVSLTVFLLVIEEIIPSSSKVIPLIGEYLVFTMIFVTLSIMVTVFAINIHHRSSSTHNAMAPWVRKIFLHKLPKLLCMRSHADRYFTQREEAESGAGPKSRNTLEAALDCIRYITRHVVKENDVREVVEDWKFIAQVLDRMFLWTFLLVSIIGTLGLFVPVIYKWANIIVPVHIGNTIK.

An N-terminal signal peptide occupies residues 1-27; it reads MVQLLAGRWRPTGARRGTRGGLPELSS. The Extracellular segment spans residues 28-239; it reads AAKHEDSLFR…VIKRLPLFYT (212 aa). Residues Asn-140, Asn-168, and Asn-214 are each glycosylated (N-linked (GlcNAc...) asparagine). Cys-155 and Cys-169 are oxidised to a cystine. Cys-219 and Cys-220 are oxidised to a cystine. The next 3 helical transmembrane spans lie at 240-260, 269-289, and 302-322; these read LFLIIPCIGLSFLTVVVFYLP, LCTSVLVSLTVFLLVIEEIIP, and LVFTMIFVTLSIMVTVFAINI. At 323–414 the chain is on the cytoplasmic side; that stretch reads HHRSSSTHNA…KFIAQVLDRM (92 aa). A helical transmembrane segment spans residues 415 to 435; sequence FLWTFLLVSIIGTLGLFVPVI. Over 436-452 the chain is Extracellular; it reads YKWANIIVPVHIGNTIK.

It belongs to the ligand-gated ion channel (TC 1.A.9) family. Acetylcholine receptor (TC 1.A.9.1) subfamily. Alpha-5/CHRNA5 sub-subfamily. As to quaternary structure, neuronal AChR that forms heteropentamers composed of two different type of subunits: alpha and non-alpha (beta). CHRNA5/alpha-5 subunit is only able to form functional nAChRs when co-assembled with another alpha subunit, can be combined to CHRNA4/alpha-4 or CHRNA3/alpha-3 and CHRNB4/beta-4 or CHRNB2/beta-2 to give rise to functional receptors. Interacts with LYPD6.

It localises to the synaptic cell membrane. It is found in the cell membrane. The catalysed reaction is Ca(2+)(in) = Ca(2+)(out). It carries out the reaction K(+)(in) = K(+)(out). The enzyme catalyses Na(+)(in) = Na(+)(out). With respect to regulation, activated by a myriad of ligands such as acetylcholine, cytisine, nicotine, choline and epibatidine. In terms of biological role, component of neuronal acetylcholine receptors (nAChRs) that function as pentameric, ligand-gated cation channels with high calcium permeability among other activities. nAChRs are excitatory neurotrasnmitter receptors formed by a collection of nAChR subunits known to mediate synaptic transmission in the nervous system and the neuromuscular junction. Each nAchR subunit confers differential attributes to channel properties, including activation, deactivation and desensitization kinetics, pH sensitivity, cation permeability, and binding to allosteric modulators. Has an accessory rather than functional role and is only able to form functional nAChRs when co-assembled with another beta subunit. Participates in pentameric assemblies along with CHRNA3, CHRNA4, CHRNB2 and CHRNB4. Increases receptor sensitivity to acetylcholine and nicotine when associated with CHRNA4 and CHRNB2. Plays a role in nicotine addiction. The sequence is that of Neuronal acetylcholine receptor subunit alpha-5 (Chrna5) from Rattus norvegicus (Rat).